We begin with the raw amino-acid sequence, 217 residues long: Ribosomal RNA small subunit methyltransferase G (217 aa).

S-adenosyl-L-methionine is bound by residues G74, L79, 125–126 (IQ), and R143.

The protein belongs to the methyltransferase superfamily. RNA methyltransferase RsmG family.

Its subcellular location is the cytoplasm. The catalysed reaction is guanosine(527) in 16S rRNA + S-adenosyl-L-methionine = N(7)-methylguanosine(527) in 16S rRNA + S-adenosyl-L-homocysteine. Its function is as follows. Specifically methylates the N7 position of guanine in position 527 of 16S rRNA. This Syntrophotalea carbinolica (strain DSM 2380 / NBRC 103641 / GraBd1) (Pelobacter carbinolicus) protein is Ribosomal RNA small subunit methyltransferase G.